The chain runs to 265 residues: Tryptophan synthase alpha chain (265 aa).

Active-site proton acceptor residues include Glu45 and Asp56.

The protein belongs to the TrpA family. In terms of assembly, tetramer of two alpha and two beta chains.

The enzyme catalyses (1S,2R)-1-C-(indol-3-yl)glycerol 3-phosphate + L-serine = D-glyceraldehyde 3-phosphate + L-tryptophan + H2O. It functions in the pathway amino-acid biosynthesis; L-tryptophan biosynthesis; L-tryptophan from chorismate: step 5/5. Functionally, the alpha subunit is responsible for the aldol cleavage of indoleglycerol phosphate to indole and glyceraldehyde 3-phosphate. The chain is Tryptophan synthase alpha chain from Halalkalibacterium halodurans (strain ATCC BAA-125 / DSM 18197 / FERM 7344 / JCM 9153 / C-125) (Bacillus halodurans).